Reading from the N-terminus, the 472-residue chain is Phosphoenolpyruvate carboxylase (472 aa).

The protein belongs to the PEPCase type 2 family. In terms of assembly, homotetramer. The cofactor is Mg(2+).

It catalyses the reaction oxaloacetate + phosphate = phosphoenolpyruvate + hydrogencarbonate. Functionally, catalyzes the irreversible beta-carboxylation of phosphoenolpyruvate (PEP) to form oxaloacetate (OAA), a four-carbon dicarboxylic acid source for the tricarboxylic acid cycle. This Pyrococcus furiosus (strain ATCC 43587 / DSM 3638 / JCM 8422 / Vc1) protein is Phosphoenolpyruvate carboxylase.